An 843-amino-acid polypeptide reads, in one-letter code: N-acetyltransferase ESCO1 (843 aa).

Positions 1–78 (MSIQEKSKEN…SASCSADKTA (78 aa)) are disordered. Acidic residues predominate over residues 18–28 (SEDENLEEEVE). Positions 66–78 (STRSASCSADKTA) are enriched in polar residues. Ser202 carries the post-translational modification Phosphoserine. The segment at 262–300 (NELRKSAHTQVSTSTKRPQIPLPLVPEHSDDQELEQAGK) is disordered. The span at 269 to 278 (HTQVSTSTKR) shows a compositional bias: polar residues. A Glycyl lysine isopeptide (Lys-Gly) (interchain with G-Cter in SUMO2) cross-link involves residue Lys335. Position 415 is a phosphoserine (Ser415). The tract at residues 546–584 (DRTFPGSAPNQQHSVLSDEASINRKNRDVPPNHSQLKHD) is disordered. Over residues 566–584 (SINRKNRDVPPNHSQLKHD) the composition is skewed to basic and acidic residues. The CCHH-type zinc-finger motif lies at 620–644 (VSCNICGMLYTASNPEDETQHLLFH). Residues 775 to 777 (IWV), 783 to 788 (RKKIAS), and 815 to 817 (TPD) contribute to the acetyl-CoA site.

Belongs to the acetyltransferase family. ECO subfamily. The subunit structure is controversial. Monomer. Homodimer. Phosphorylated during mitosis.

Its subcellular location is the nucleus. The protein localises to the chromosome. The catalysed reaction is L-lysyl-[protein] + acetyl-CoA = N(6)-acetyl-L-lysyl-[protein] + CoA + H(+). Its function is as follows. Acetyltransferase required for the establishment of sister chromatid cohesion. Couples the processes of cohesion and DNA replication to ensure that only sister chromatids become paired together. In contrast to the structural cohesins, the deposition and establishment factors are required only during S phase. Acts by mediating the acetylation of cohesin component SMC3. The polypeptide is N-acetyltransferase ESCO1 (Esco1) (Mus musculus (Mouse)).